Reading from the N-terminus, the 381-residue chain is Putrescine N-methyltransferase 3 (381 aa).

The interval 21 to 81 is disordered; sequence MNGYQNGTSK…TISHDNGNEL (61 aa). 2 stretches are compositionally biased toward polar residues: residues 23–39 and 46–81; these read GYQNGTSKHQNGHQNGT and HQNGISEHQNGHQNGTSEHQNGHQNGTISHDNGNEL. The region spanning 92–329 is the PABS domain; the sequence is PGWFSEFSAL…GVIGYMLCST (238 aa). Residues Gln-123, Glu-198, and 229–230 each bind S-adenosyl-L-methionine; that span reads DG. The active-site Proton acceptor is Asp-248. Tyr-317 contacts S-adenosyl-L-methionine.

This sequence belongs to the class I-like SAM-binding methyltransferase superfamily. Putrescine methyltransferase family. Predominantly expressed in roots.

The catalysed reaction is putrescine + S-adenosyl-L-methionine = N-methylputrescine + S-adenosyl-L-homocysteine + H(+). It participates in alkaloid biosynthesis; nicotine biosynthesis. In terms of biological role, involved in the biosynthesis of pyridine alkaloid natural products, leading mainly to the production of anabasine, anatabine, nicotine and nornicotine, effective deterrents against herbivores with antiparasitic and pesticide properties (neurotoxins); nornicotine serves as the precursor in the synthesis of the carcinogen compound N'-nitrosonornicotine (NNN). Methyltransferase that mediates the conversion of putrescine to N-methylputrescine. Promotes leaves ripening. This is Putrescine N-methyltransferase 3 from Nicotiana tabacum (Common tobacco).